The chain runs to 88 residues: Conotoxin VxVIB (88 aa).

An N-terminal signal peptide occupies residues 1-22 (MNLACVLIVAVLFLTASQLATA). The propeptide occupies 23-52 (ASYARDKQEYPAVRSSDEMQDSEDLTLTKE). Disulfide bonds link cysteine 53/cysteine 68, cysteine 60/cysteine 72, and cysteine 67/cysteine 81.

As to expression, expressed by the venom duct.

Its subcellular location is the secreted. Functionally, may act as a neurotoxin, but produces no obvious effect on ionic currents when tested on the mouse dorsal rooted ganglia (DRG). The protein is Conotoxin VxVIB of Conus vexillum (Flag cone).